The chain runs to 123 residues: Basic phospholipase A2 Ph-TX1 (123 aa).

Residues tyrosine 27, glycine 29, and glycine 31 each coordinate Ca(2+). 6 disulfide bridges follow: cysteine 28–cysteine 45, cysteine 44–cysteine 96, cysteine 50–cysteine 123, cysteine 51–cysteine 89, cysteine 59–cysteine 83, and cysteine 77–cysteine 87. The active site involves histidine 48. Aspartate 49 provides a ligand contact to Ca(2+). Aspartate 90 is a catalytic residue.

Belongs to the phospholipase A2 family. Group II subfamily. D49 sub-subfamily. In terms of assembly, monomer. The cofactor is Ca(2+). In terms of tissue distribution, expressed by the venom gland.

The protein resides in the secreted. The catalysed reaction is a 1,2-diacyl-sn-glycero-3-phosphocholine + H2O = a 1-acyl-sn-glycero-3-phosphocholine + a fatty acid + H(+). Inhibited by divalent cations different from calcium ions (cadmium, magnesium, manganese, zinc), since they act as competitive antagonists of this cofactor. Its function is as follows. Snake venom phospholipase A2 (PLA2) that induces in vivo myotoxicity, moderates footpad edema, and causes in vitro neuromuscular blockade. PLA2 catalyzes the calcium-dependent hydrolysis of the 2-acyl groups in 3-sn-phosphoglycerides. The chain is Basic phospholipase A2 Ph-TX1 from Bothrocophias hyoprora (Amazonian hognose viper).